Reading from the N-terminus, the 364-residue chain is Ribosomal RNA large subunit methyltransferase M (364 aa).

S-adenosyl-L-methionine is bound by residues Ser194, 227–230 (CPGG), Asp246, Asp266, and Asp284. The Proton acceptor role is filled by Lys313.

The protein belongs to the class I-like SAM-binding methyltransferase superfamily. RNA methyltransferase RlmE family. RlmM subfamily. Monomer.

The protein resides in the cytoplasm. It catalyses the reaction cytidine(2498) in 23S rRNA + S-adenosyl-L-methionine = 2'-O-methylcytidine(2498) in 23S rRNA + S-adenosyl-L-homocysteine + H(+). Catalyzes the 2'-O-methylation at nucleotide C2498 in 23S rRNA. This chain is Ribosomal RNA large subunit methyltransferase M, found in Actinobacillus succinogenes (strain ATCC 55618 / DSM 22257 / CCUG 43843 / 130Z).